A 218-amino-acid polypeptide reads, in one-letter code: Probable transaldolase (218 aa).

K83 acts as the Schiff-base intermediate with substrate in catalysis.

It belongs to the transaldolase family. Type 3B subfamily.

It localises to the cytoplasm. It carries out the reaction D-sedoheptulose 7-phosphate + D-glyceraldehyde 3-phosphate = D-erythrose 4-phosphate + beta-D-fructose 6-phosphate. Its pathway is carbohydrate degradation; pentose phosphate pathway; D-glyceraldehyde 3-phosphate and beta-D-fructose 6-phosphate from D-ribose 5-phosphate and D-xylulose 5-phosphate (non-oxidative stage): step 2/3. Transaldolase is important for the balance of metabolites in the pentose-phosphate pathway. The polypeptide is Probable transaldolase (tal) (Mesorhizobium japonicum (strain LMG 29417 / CECT 9101 / MAFF 303099) (Mesorhizobium loti (strain MAFF 303099))).